Here is a 100-residue protein sequence, read N- to C-terminus: Cystatin-B (100 aa).

Residues 6–88 (GGISAPLDAD…GGGLELSGMQ (83 aa)) form the Cystatin domain. Residues 48-52 (QIVSG) carry the Secondary area of contact motif.

Belongs to the cystatin family. As to expression, widely expressed. Highly expressed in liver and to a lesser extent in spleen, gill, brain, intestine, kidney, head kidney and blood. Lowest level in muscle.

Its subcellular location is the cytoplasm. Its function is as follows. Thiol protease inhibitor. Has papain inhibitory activity in vitro. May be involved in immune responses against invading Gram-negative bacteria. The protein is Cystatin-B of Oplegnathus fasciatus (Barred knifejaw).